Consider the following 300-residue polypeptide: MTGHTLVRRKSIGRDKRLVGRSRRQWRDMNLPSYGNSKGTNMDIYRAYFEFIAESPADELMLVKDLVTPLIKTTSISLPFDMSEAVADNCLSLSGMGYYLGVGGCCPTCVSSGDPRLGRNDRAALILAYVQQINNIYHYRIFLASIIVLGDRLRGDARDKDMESILTRIIAIPELFFAYYVLLDSGIKNVKVLFYLDREAGSSEYMMYIVFPGKALHLHYRLIDCMKSACKSYRIIAHVWRTNFLLVIRKEYDRQTDSCDVPAVNAEDVYCKLCDLNIDGELLLEYGKLYSAFDEFLPPR.

The CCCH-type zinc finger occupies 90 to 217 (CLSLSGMGYY…YIVFPGKALH (128 aa)).

It belongs to the herpesviridae NEC1 protein family. In terms of assembly, forms a heterohexameric complex with NEC2. Interacts with capsid vertex specific component 2/CVC2; this interaction directs the capsid to the host inner nuclear membrane to initiate budding. Post-translationally, phosphorylated at serine residues in the N-terminus. This phosphorylation regulates the localization within the inner nuclear membrane.

It localises to the host nucleus inner membrane. Plays an essential role in virion nuclear egress, the first step of virion release from infected cell. Within the host nucleus, NEC1 interacts with the newly formed capsid through the vertexes and directs it to the inner nuclear membrane by associating with NEC2. Induces the budding of the capsid at the inner nuclear membrane as well as its envelopment into the perinuclear space. There, the NEC1/NEC2 complex promotes the fusion of the enveloped capsid with the outer nuclear membrane and the subsequent release of the viral capsid into the cytoplasm where it will reach the secondary budding sites in the host Golgi or trans-Golgi network. This Gallid herpesvirus 2 (strain Chicken/Md5/ATCC VR-987) (GaHV-2) protein is Nuclear egress protein 1.